A 112-amino-acid polypeptide reads, in one-letter code: ATP synthase epsilon chain (112 aa).

The protein belongs to the ATPase epsilon chain family. As to quaternary structure, F-type ATPases have 2 components, CF(1) - the catalytic core - and CF(0) - the membrane proton channel. CF(1) has five subunits: alpha(3), beta(3), gamma(1), delta(1), epsilon(1). CF(0) has three main subunits: a, b and c.

The protein localises to the cell inner membrane. Functionally, produces ATP from ADP in the presence of a proton gradient across the membrane. The chain is ATP synthase epsilon chain from Rickettsia rickettsii (strain Sheila Smith).